Here is a 164-residue protein sequence, read N- to C-terminus: ATP synthase subunit b (164 aa).

A helical transmembrane segment spans residues 4 to 24 (IHFDLTLVVQVLSFLLLVYIL).

This sequence belongs to the ATPase B chain family. In terms of assembly, F-type ATPases have 2 components, F(1) - the catalytic core - and F(0) - the membrane proton channel. F(1) has five subunits: alpha(3), beta(3), gamma(1), delta(1), epsilon(1). F(0) has three main subunits: a(1), b(2) and c(10-14). The alpha and beta chains form an alternating ring which encloses part of the gamma chain. F(1) is attached to F(0) by a central stalk formed by the gamma and epsilon chains, while a peripheral stalk is formed by the delta and b chains.

The protein localises to the cell membrane. In terms of biological role, f(1)F(0) ATP synthase produces ATP from ADP in the presence of a proton or sodium gradient. F-type ATPases consist of two structural domains, F(1) containing the extramembraneous catalytic core and F(0) containing the membrane proton channel, linked together by a central stalk and a peripheral stalk. During catalysis, ATP synthesis in the catalytic domain of F(1) is coupled via a rotary mechanism of the central stalk subunits to proton translocation. Functionally, component of the F(0) channel, it forms part of the peripheral stalk, linking F(1) to F(0). This chain is ATP synthase subunit b, found in Desulfitobacterium hafniense (strain Y51).